The following is a 435-amino-acid chain: Transcription factor tau 55 kDa subunit (435 aa).

Residues 362–417 form a disordered region; the sequence is GLLSPTEENETTNAGQSKGSSTANDPNIQIQEEDVGLPDSTNTSRDHTGDKEEVQS. Ser365 is modified (phosphoserine). Residues 372–391 are compositionally biased toward polar residues; sequence TTNAGQSKGSSTANDPNIQI. A compositionally biased stretch (basic and acidic residues) spans 405-417; the sequence is SRDHTGDKEEVQS.

As to quaternary structure, component of the TFIIIC complex composed of TFC1, TFC3, TFC4, TFC6, TFC7 and TFC8. The subunits are organized in two globular domains, tauA and tauB, connected by a proteolysis-sensitive and flexible linker.

The protein resides in the nucleus. TFIIIC mediates tRNA and 5S RNA gene activation by binding to intragenic promoter elements. Upstream of the transcription start site, TFIIIC assembles the initiation complex TFIIIB-TFIIIC-tDNA, which is sufficient for RNA polymerase III recruitment and function. Part of the tauA domain of TFIIIC that binds boxA DNA promoter sites of tRNA and similar genes. This chain is Transcription factor tau 55 kDa subunit (TFC7), found in Saccharomyces cerevisiae (strain ATCC 204508 / S288c) (Baker's yeast).